We begin with the raw amino-acid sequence, 216 residues long: Ras-related protein Rab11C (216 aa).

Residue 19–26 (GDSGVGKS) participates in GTP binding. The Effector region motif lies at 41-49 (SKSTIGVEF). Residues 67-71 (DTAGQ) and 125-128 (NKSD) each bind GTP. Residues cysteine 213 and cysteine 214 are each lipidated (S-geranylgeranyl cysteine).

Belongs to the small GTPase superfamily. Rab family.

The protein resides in the cell membrane. The sequence is that of Ras-related protein Rab11C (RAB11C) from Lotus japonicus (Lotus corniculatus var. japonicus).